A 202-amino-acid chain; its full sequence is Holliday junction resolvase RecU (202 aa).

Mg(2+) contacts are provided by Thr-85, Asp-87, Glu-100, and Gln-119.

This sequence belongs to the RecU family. Mg(2+) is required as a cofactor.

The protein localises to the cytoplasm. It carries out the reaction Endonucleolytic cleavage at a junction such as a reciprocal single-stranded crossover between two homologous DNA duplexes (Holliday junction).. Its function is as follows. Endonuclease that resolves Holliday junction intermediates in genetic recombination. Cleaves mobile four-strand junctions by introducing symmetrical nicks in paired strands. Promotes annealing of linear ssDNA with homologous dsDNA. Required for DNA repair, homologous recombination and chromosome segregation. The polypeptide is Holliday junction resolvase RecU (Streptococcus uberis (strain ATCC BAA-854 / 0140J)).